We begin with the raw amino-acid sequence, 24 residues long: Humanin-like 3 (24 aa).

This sequence belongs to the humanin family. Highly expressed in testis. Also expressed in kidney, heart, skeletal muscles and brain.

It localises to the secreted. The protein resides in the cytoplasm. Functionally, plays a role as a neuroprotective and antiapoptotic factor. This chain is Humanin-like 3, found in Homo sapiens (Human).